We begin with the raw amino-acid sequence, 228 residues long: Sugar fermentation stimulation protein homolog (228 aa).

The protein belongs to the SfsA family.

The sequence is that of Sugar fermentation stimulation protein homolog from Desulfitobacterium hafniense (strain Y51).